A 66-amino-acid chain; its full sequence is MKASDVRGFTADQLKDELAKLKKEQFNLRFQKATGQLEKSSRINEVRKDIARVKTIARQKAAEVKA.

It belongs to the universal ribosomal protein uL29 family.

In Rhizobium leguminosarum bv. trifolii (strain WSM2304), this protein is Large ribosomal subunit protein uL29.